A 422-amino-acid chain; its full sequence is Phosphoribosylamine--glycine ligase (422 aa).

Positions 107-312 constitute an ATP-grasp domain; the sequence is KDVMAAAGVR…LGQLLHAAAT (206 aa). 137–193 is a binding site for ATP; that stretch reads GPPAGDPAWVVKDDRLAAGKGVVVTADRDVARAHGAALLEAGHPVLLESYLDGPEVS. Mg(2+)-binding residues include Glu-282 and Asn-284.

The protein belongs to the GARS family. Mg(2+) is required as a cofactor. The cofactor is Mn(2+).

It catalyses the reaction 5-phospho-beta-D-ribosylamine + glycine + ATP = N(1)-(5-phospho-beta-D-ribosyl)glycinamide + ADP + phosphate + H(+). It participates in purine metabolism; IMP biosynthesis via de novo pathway; N(1)-(5-phospho-D-ribosyl)glycinamide from 5-phospho-alpha-D-ribose 1-diphosphate: step 2/2. In Mycobacterium bovis (strain ATCC BAA-935 / AF2122/97), this protein is Phosphoribosylamine--glycine ligase.